Consider the following 306-residue polypeptide: Glutaminase (306 aa).

The substrate site is built by serine 64, asparagine 115, glutamate 159, asparagine 166, tyrosine 190, tyrosine 242, and valine 260.

Belongs to the glutaminase family. Homotetramer.

It catalyses the reaction L-glutamine + H2O = L-glutamate + NH4(+). The polypeptide is Glutaminase (Vibrio vulnificus (strain YJ016)).